Consider the following 259-residue polypeptide: Sugar fermentation stimulation protein homolog (259 aa).

Belongs to the SfsA family.

This is Sugar fermentation stimulation protein homolog from Prochlorococcus marinus (strain MIT 9303).